Consider the following 579-residue polypeptide: Nuclear hormone receptor family member nhr-22 (579 aa).

A DNA-binding region (nuclear receptor) is located at residues 93–173 (SRSCHVCSSP…AGMRRELVQA (81 aa)). 2 NR C4-type zinc fingers span residues 96-117 (CHVCSSPTANTLHFGGRSCKAC) and 133-161 (CIGTGDDTNPCRTHYELRMICRHCRFIKC). Low complexity predominate over residues 233-242 (LSPDPSSSQP). A disordered region spans residues 233 to 256 (LSPDPSSSQPLDMTVTPPPLHRST). Positions 304–577 (EVENKIFELV…SIMYDLLSFR (274 aa)) constitute an NR LBD domain.

It belongs to the nuclear hormone receptor family.

It is found in the nucleus. Its function is as follows. Orphan nuclear receptor. This chain is Nuclear hormone receptor family member nhr-22 (nhr-22), found in Caenorhabditis elegans.